The primary structure comprises 475 residues: Chromosomal replication initiator protein DnaA (475 aa).

Residues 1-73 (MTNSEQERWS…LSCWQAEMPE (73 aa)) are domain I, interacts with DnaA modulators. A domain II region spans residues 73-131 (EVHRIDLSVRTAMRCATPAKEAPVAVEARRAERGDAKPADTRAPVMTPVAASHDALGGS). Residues 132–354 (PLDPRLTFAS…GAINRLLAHS (223 aa)) form a domain III, AAA+ region region. Glycine 179, glycine 181, lysine 182, and threonine 183 together coordinate ATP. A domain IV, binds dsDNA region spans residues 355–475 (KLNNQPVTLD…VEALKRQLQD (121 aa)).

Belongs to the DnaA family. Oligomerizes as a right-handed, spiral filament on DNA at oriC.

Its subcellular location is the cytoplasm. In terms of biological role, plays an essential role in the initiation and regulation of chromosomal replication. ATP-DnaA binds to the origin of replication (oriC) to initiate formation of the DNA replication initiation complex once per cell cycle. Binds the DnaA box (a 9 base pair repeat at the origin) and separates the double-stranded (ds)DNA. Forms a right-handed helical filament on oriC DNA; dsDNA binds to the exterior of the filament while single-stranded (ss)DNA is stabiized in the filament's interior. The ATP-DnaA-oriC complex binds and stabilizes one strand of the AT-rich DNA unwinding element (DUE), permitting loading of DNA polymerase. After initiation quickly degrades to an ADP-DnaA complex that is not apt for DNA replication. Binds acidic phospholipids. The sequence is that of Chromosomal replication initiator protein DnaA from Bradyrhizobium sp. (strain BTAi1 / ATCC BAA-1182).